We begin with the raw amino-acid sequence, 377 residues long: DNA primase small subunit PriS (377 aa).

Active-site residues include D99, D101, and D274.

The protein belongs to the eukaryotic-type primase small subunit family. Heterodimer of a small subunit (PriS) and a large subunit (PriL). Mg(2+) is required as a cofactor. The cofactor is Mn(2+).

Functionally, catalytic subunit of DNA primase, an RNA polymerase that catalyzes the synthesis of short RNA molecules used as primers for DNA polymerase during DNA replication. The small subunit contains the primase catalytic core and has DNA synthesis activity on its own. Binding to the large subunit stabilizes and modulates the activity, increasing the rate of DNA synthesis while decreasing the length of the DNA fragments, and conferring RNA synthesis capability. The DNA polymerase activity may enable DNA primase to also catalyze primer extension after primer synthesis. May also play a role in DNA repair. The polypeptide is DNA primase small subunit PriS (Staphylothermus marinus (strain ATCC 43588 / DSM 3639 / JCM 9404 / F1)).